The primary structure comprises 306 residues: Recombination-associated protein RdgC (306 aa).

Belongs to the RdgC family.

Its subcellular location is the cytoplasm. It is found in the nucleoid. Its function is as follows. May be involved in recombination. The polypeptide is Recombination-associated protein RdgC (Pseudomonas syringae pv. tomato (strain ATCC BAA-871 / DC3000)).